A 616-amino-acid chain; its full sequence is Chaperone protein HscA homolog (616 aa).

Belongs to the heat shock protein 70 family.

Chaperone involved in the maturation of iron-sulfur cluster-containing proteins. Has a low intrinsic ATPase activity which is markedly stimulated by HscB. The chain is Chaperone protein HscA homolog from Histophilus somni (strain 129Pt) (Haemophilus somnus).